The chain runs to 207 residues: dTTP/UTP pyrophosphatase (207 aa).

The Proton acceptor role is filled by Asp-79.

Belongs to the Maf family. YhdE subfamily. A divalent metal cation is required as a cofactor.

Its subcellular location is the cytoplasm. It catalyses the reaction dTTP + H2O = dTMP + diphosphate + H(+). The enzyme catalyses UTP + H2O = UMP + diphosphate + H(+). Functionally, nucleoside triphosphate pyrophosphatase that hydrolyzes dTTP and UTP. May have a dual role in cell division arrest and in preventing the incorporation of modified nucleotides into cellular nucleic acids. In Nitrobacter winogradskyi (strain ATCC 25391 / DSM 10237 / CIP 104748 / NCIMB 11846 / Nb-255), this protein is dTTP/UTP pyrophosphatase.